The primary structure comprises 166 residues: Protein-export protein SecB (166 aa).

Residues 1–16 (MTDTSAAGNPTPGQQP) are compositionally biased toward polar residues. Positions 1–21 (MTDTSAAGNPTPGQQPANPPS) are disordered.

Belongs to the SecB family. As to quaternary structure, homotetramer, a dimer of dimers. One homotetramer interacts with 1 SecA dimer.

It localises to the cytoplasm. One of the proteins required for the normal export of preproteins out of the cell cytoplasm. It is a molecular chaperone that binds to a subset of precursor proteins, maintaining them in a translocation-competent state. It also specifically binds to its receptor SecA. The sequence is that of Protein-export protein SecB from Hyphomonas neptunium (strain ATCC 15444).